Here is a 482-residue protein sequence, read N- to C-terminus: PAN domain-containing protein At5g03700 (482 aa).

Positions 1–31 are cleaved as a signal peptide; that stretch reads MEGLCLNSFTRVLLLLFVFLVFSHKWQRVNA. Positions 330–411 constitute a PAN domain; sequence CDKTTEFKVV…SKLGYFKVRE (82 aa). 2 cysteine pairs are disulfide-bonded: Cys363/Cys385 and Cys367/Cys373. Residues 425 to 445 traverse the membrane as a helical segment; sequence GMSLLAVIALVLMVAMVYVGF.

Its subcellular location is the membrane. The sequence is that of PAN domain-containing protein At5g03700 from Arabidopsis thaliana (Mouse-ear cress).